The chain runs to 206 residues: Inner membrane-spanning protein YciB (206 aa).

The next 5 helical transmembrane spans lie at 50-70, 78-98, 105-125, 150-170, and 173-193; these read PILL…GYLL, GTLW…IYFH, WKPT…QIFL, LSWV…AFNF, and AAWV…FIII.

It belongs to the YciB family.

It is found in the cell inner membrane. In terms of biological role, plays a role in cell envelope biogenesis, maintenance of cell envelope integrity and membrane homeostasis. This is Inner membrane-spanning protein YciB from Herminiimonas arsenicoxydans.